Consider the following 264-residue polypeptide: Thymidylate synthase (264 aa).

Arginine 21 is a dUMP binding site. Histidine 51 lines the (6R)-5,10-methylene-5,6,7,8-tetrahydrofolate pocket. 126–127 (RR) contributes to the dUMP binding site. The active-site Nucleophile is cysteine 146. DUMP-binding positions include 166-169 (RSCD), asparagine 177, and 207-209 (HLY). Aspartate 169 serves as a coordination point for (6R)-5,10-methylene-5,6,7,8-tetrahydrofolate. Position 263 (alanine 263) interacts with (6R)-5,10-methylene-5,6,7,8-tetrahydrofolate.

Belongs to the thymidylate synthase family. Bacterial-type ThyA subfamily. In terms of assembly, homodimer.

The protein resides in the cytoplasm. The catalysed reaction is dUMP + (6R)-5,10-methylene-5,6,7,8-tetrahydrofolate = 7,8-dihydrofolate + dTMP. It participates in pyrimidine metabolism; dTTP biosynthesis. In terms of biological role, catalyzes the reductive methylation of 2'-deoxyuridine-5'-monophosphate (dUMP) to 2'-deoxythymidine-5'-monophosphate (dTMP) while utilizing 5,10-methylenetetrahydrofolate (mTHF) as the methyl donor and reductant in the reaction, yielding dihydrofolate (DHF) as a by-product. This enzymatic reaction provides an intracellular de novo source of dTMP, an essential precursor for DNA biosynthesis. The polypeptide is Thymidylate synthase (Salmonella typhi).